The chain runs to 634 residues: Chaperone protein HtpG (634 aa).

Residues 1-342 (MSVETQKETL…SNDLSLNVSR (342 aa)) are a; substrate-binding. Residues 343-559 (EILQKDPIID…EQDLGLQMRQ (217 aa)) are b. The segment at 560 to 634 (ILEASGQKVP…LNKLLVELSV (75 aa)) is c.

It belongs to the heat shock protein 90 family. In terms of assembly, homodimer.

It is found in the cytoplasm. In terms of biological role, molecular chaperone. Has ATPase activity. The polypeptide is Chaperone protein HtpG (Pseudomonas fluorescens (strain ATCC BAA-477 / NRRL B-23932 / Pf-5)).